A 541-amino-acid polypeptide reads, in one-letter code: Glutamyl-tRNA(Gln) amidotransferase subunit B, mitochondrial (541 aa).

Belongs to the GatB/GatE family. GatB subfamily. In terms of assembly, subunit of the heterotrimeric GatFAB amidotransferase (AdT) complex, composed of A, B and F subunits.

The protein resides in the mitochondrion. The enzyme catalyses L-glutamyl-tRNA(Gln) + L-glutamine + ATP + H2O = L-glutaminyl-tRNA(Gln) + L-glutamate + ADP + phosphate + H(+). Its function is as follows. Allows the formation of correctly charged Gln-tRNA(Gln) through the transamidation of misacylated Glu-tRNA(Gln) in the mitochondria. The reaction takes place in the presence of glutamine and ATP through an activated gamma-phospho-Glu-tRNA(Gln). This chain is Glutamyl-tRNA(Gln) amidotransferase subunit B, mitochondrial, found in Saccharomyces cerevisiae (strain RM11-1a) (Baker's yeast).